The following is a 276-amino-acid chain: Shikimate dehydrogenase (NADP(+)) (276 aa).

Shikimate contacts are provided by residues 15–17 and T62; that span reads SKS. Residue K66 is the Proton acceptor of the active site. E78 serves as a coordination point for NADP(+). 2 residues coordinate shikimate: N87 and D103. NADP(+)-binding positions include 128-132 and I217; that span reads GAGGA. Position 219 (Y219) interacts with shikimate. NADP(+) is bound at residue G240.

This sequence belongs to the shikimate dehydrogenase family. Homodimer.

The enzyme catalyses shikimate + NADP(+) = 3-dehydroshikimate + NADPH + H(+). Its pathway is metabolic intermediate biosynthesis; chorismate biosynthesis; chorismate from D-erythrose 4-phosphate and phosphoenolpyruvate: step 4/7. Its function is as follows. Involved in the biosynthesis of the chorismate, which leads to the biosynthesis of aromatic amino acids. Catalyzes the reversible NADPH linked reduction of 3-dehydroshikimate (DHSA) to yield shikimate (SA). This chain is Shikimate dehydrogenase (NADP(+)), found in Lysinibacillus sphaericus (strain C3-41).